The chain runs to 295 residues: Putative enoyl reductase C646.07c (295 aa).

Over 1 to 84 the chain is Cytoplasmic; the sequence is MSITLSSRGR…KDLGPQIGWR (84 aa). A helical transmembrane segment spans residues 85–105; that stretch reads TVFMIEYLGPLVIHLFFILNY. The Lumenal portion of the chain corresponds to 106–157; sequence KWIYRKDYNLCLNQKIAFVLVMLHFMKREYESIFVHRFSLATMPLRNIFKNC. A helical transmembrane segment spans residues 158–178; it reads AHYHLLSGLFLAYFIYGPWHA. At 179 to 186 the chain is on the cytoplasmic side; sequence NDYIKPNH. Residues 187–207 form a helical membrane-spanning segment; sequence LLFLIVGWAFAVLSNFRTHII. Residues 208–223 lie on the Lumenal side of the membrane; it reads LRDLRPAGSKKRVIPT. Residues 224–246 form a helical membrane-spanning segment; the sequence is GYGFNLVSFPNYFFESLGWLFFA. Over 247–250 the chain is Cytoplasmic; that stretch reads LLTK. The helical transmembrane segment at 251-268 threads the bilayer; it reads SWASWIFLFVGSAQMFVW. The Lumenal segment spans residues 269–295; the sequence is AKKKHARYLKEFPNYPRSRKIMIPFFL.

It belongs to the steroid 5-alpha reductase family.

The protein resides in the endoplasmic reticulum membrane. It carries out the reaction a (2E)-enoyl-CoA + NADPH + H(+) = a 2,3-saturated acyl-CoA + NADP(+). The chain is Putative enoyl reductase C646.07c from Schizosaccharomyces pombe (strain 972 / ATCC 24843) (Fission yeast).